Consider the following 298-residue polypeptide: N-acetylmuramic acid 6-phosphate etherase (298 aa).

An SIS domain is found at 55-218; it reads IHTQVSGGGR…STGLMIKSGK (164 aa). E83 acts as the Proton donor in catalysis. E114 is a catalytic residue.

It belongs to the GCKR-like family. MurNAc-6-P etherase subfamily. As to quaternary structure, homodimer.

The catalysed reaction is N-acetyl-D-muramate 6-phosphate + H2O = N-acetyl-D-glucosamine 6-phosphate + (R)-lactate. It participates in amino-sugar metabolism; 1,6-anhydro-N-acetylmuramate degradation. Its pathway is amino-sugar metabolism; N-acetylmuramate degradation. The protein operates within cell wall biogenesis; peptidoglycan recycling. In terms of biological role, specifically catalyzes the cleavage of the D-lactyl ether substituent of MurNAc 6-phosphate, producing GlcNAc 6-phosphate and D-lactate. Together with AnmK, is also required for the utilization of anhydro-N-acetylmuramic acid (anhMurNAc) either imported from the medium or derived from its own cell wall murein, and thus plays a role in cell wall recycling. The sequence is that of N-acetylmuramic acid 6-phosphate etherase from Escherichia coli O1:K1 / APEC.